Reading from the N-terminus, the 79-residue chain is Small ribosomal subunit protein bS16c (79 aa).

It belongs to the bacterial ribosomal protein bS16 family.

It is found in the plastid. Its subcellular location is the chloroplast. In Thalassiosira pseudonana (Marine diatom), this protein is Small ribosomal subunit protein bS16c.